The chain runs to 172 residues: Centrin-1 (172 aa).

The segment at 1-31 (MASGFKKPSAASTGQKRKVAPKPELTEDQKQ) is disordered. EF-hand domains lie at 28–63 (DQKQEVREAFDLFDVDGSGTIDAKELKVAMRALGFE), 64–99 (PRKEEMKKMISEVDREGTGKISFNDFLAVMTQKMSE), 101–136 (DTKEEILKAFRLFDDDETGKISFKNLKRVANELGEN), and 137–172 (LTDEELQEMIDEADRDGDGEVNEEEFLRIMKKTSLY). Ca(2+) contacts are provided by Asp41, Asp43, Ser45, Thr47, and Glu52. 5 residues coordinate Ca(2+): Asp150, Asp152, Asp154, Glu156, and Glu161.

The protein belongs to the centrin family. In terms of assembly, monomer. Interacts with CIMAP3. Interacts with USP49.

It is found in the cytoplasm. The protein localises to the cytoskeleton. It localises to the microtubule organizing center. Its subcellular location is the centrosome. The protein resides in the cell projection. It is found in the cilium. In terms of biological role, plays a fundamental role in microtubule-organizing center structure and function. Plays a role in sperm cilia formation. The sequence is that of Centrin-1 from Homo sapiens (Human).